The chain runs to 151 residues: Cytochrome c-type biogenesis protein CcmE (151 aa).

Over 1 to 8 the chain is Cytoplasmic; that stretch reads MNPQRKKR. A helical; Signal-anchor for type II membrane protein transmembrane segment spans residues 9-29; sequence LFLILGLLAGVAVAVGFALSA. Topologically, residues 30-151 are periplasmic; sequence LQQNINLFYT…QAASGAEAKP (122 aa). Residues His-124 and Tyr-128 each coordinate heme.

The protein belongs to the CcmE/CycJ family.

It is found in the cell inner membrane. Heme chaperone required for the biogenesis of c-type cytochromes. Transiently binds heme delivered by CcmC and transfers the heme to apo-cytochromes in a process facilitated by CcmF and CcmH. The polypeptide is Cytochrome c-type biogenesis protein CcmE (Pseudomonas putida (strain W619)).